Reading from the N-terminus, the 389-residue chain is Serpin-Z3 (389 aa).

Residues 337-361 (GTEAAAVSVAIMMPQCLMRNPDFVA) are RCL.

Belongs to the serpin family.

In terms of biological role, probable serine protease inhibitor. This chain is Serpin-Z3, found in Arabidopsis thaliana (Mouse-ear cress).